The chain runs to 496 residues: ADP-dependent glucokinase (496 aa).

Positions 1–22 (MALWRGSACAGFLALAVGCVFL) are cleaved as a signal peptide. In terms of domain architecture, ADPK spans 52 to 496 (SPESRLAAAW…GLFYSEARPD (445 aa)). Positions 297, 328, and 481 each coordinate Mg(2+). D481 acts as the Proton acceptor in catalysis.

Belongs to the ADP-dependent glucokinase family. As to quaternary structure, monomer. It depends on Mg(2+) as a cofactor.

It localises to the secreted. It catalyses the reaction D-glucose + ADP = D-glucose 6-phosphate + AMP + H(+). It functions in the pathway carbohydrate degradation; glycolysis. In terms of biological role, catalyzes the phosphorylation of D-glucose to D-glucose 6-phosphate using ADP as the phosphate donor. GDP and CDP can replace ADP, but with reduced efficiency. The chain is ADP-dependent glucokinase (Adpgk) from Mus musculus (Mouse).